Consider the following 560-residue polypeptide: MKVWMAILISILCWQSSAWAVCPAWSPARAQEEISRLQQQIKQWDDDYWKEGKSEVEDGVYDQLSARLTQWQRCFGNETRDAMMPPLNGAVMHPVAHTGVRKMADKNALSLWMRERSDLWVQPKVDGVAVTLVYRDGKLNKAISRGNGLKGEDWTQKVRLISAVPQTVSGPLANSTLQGEIFLKRKGHIQQQMGGINARAKVAGLMMRQGNSDTLNSLAVFVWAWPDGPQLMTDRLKELATAGFTLTQTYTRAVKNADEVAHVRNEWWKAKLPFVTDGVVVRAAKEPESRHWLPGQAEWLVAWKYQPVAQVAEVKAIQFAVGKSGKISVVASLAPVMLDDKKVQRVNIGSVRRWQEWDIAPGDQILVSLAGQGIPRIDDVVWRGAERTKPTPPENRFNSLTCYFASDVCQEQFISRLVWLGSKQVLGLDGIGEAGWRALHQTHRFEHIFSWLLLTPEQLQNTPGIAKSKSAQLWHQFNLARQQPFTRWVMAMGIPLTRAALNASDERSWSQLLFSTEQFWQQLPGTGSGRARQVIEWKENAQIKKLGSWLAAQQITGFEP.

The active-site N6-AMP-lysine intermediate is the Lys124.

Belongs to the NAD-dependent DNA ligase family. LigB subfamily.

The catalysed reaction is NAD(+) + (deoxyribonucleotide)n-3'-hydroxyl + 5'-phospho-(deoxyribonucleotide)m = (deoxyribonucleotide)n+m + AMP + beta-nicotinamide D-nucleotide.. In terms of biological role, catalyzes the formation of phosphodiester linkages between 5'-phosphoryl and 3'-hydroxyl groups in double-stranded DNA using NAD as a coenzyme and as the energy source for the reaction. The chain is DNA ligase B from Escherichia coli (strain SMS-3-5 / SECEC).